A 608-amino-acid polypeptide reads, in one-letter code: Actin-interacting protein 1 (608 aa).

11 WD repeats span residues 62-101 (EHSC…HLLK), 106-149 (PIAG…GEIS), 150-190 (GQSK…FKMT), 193-232 (DHSR…LVGE), 237-276 (AHKG…LVSE), 323-362 (GHNK…NDRI), 366-403 (GHGN…YTDY), 444-483 (PIKY…LEPK), 487-526 (DHLG…PAHN), 531-570 (FHSA…KHTI), and 575-607 (HPQS…HVEN).

It belongs to the WD repeat AIP1 family. Expressed in pupal wing cells.

It localises to the cytoplasm. The protein localises to the cytoskeleton. In terms of biological role, induces disassembly of actin filaments in conjunction with ADF/cofilin family proteins. Together with GMF, promotes Arp2/3-nucleated actin filament array disassembly. Essential for organismal and cell viability. Required for the development of normal wing cell planar polarity. In egg chambers and together with GMF, plays an important role in directional migration of border cell clusters. The polypeptide is Actin-interacting protein 1 (flr) (Drosophila melanogaster (Fruit fly)).